Here is a 929-residue protein sequence, read N- to C-terminus: Ras guanine nucleotide exchange factor M (929 aa).

Over residues 1–15 (MWQKPSLTKSMMNEV) the composition is skewed to polar residues. 2 disordered regions span residues 1 to 102 (MWQK…AAGS) and 169 to 316 (TNNN…SKSL). Residues 16–33 (SSNSPKSPTLTSSPSTQS) show a composition bias toward low complexity. Over residues 44 to 67 (LDGGGGGSNRLIFGGSGGGSGGGS) the composition is skewed to gly residues. 2 stretches are compositionally biased toward low complexity: residues 68–80 (LPSS…VNPF) and 169–191 (TNNN…NNDG). Positions 192–202 (SGSGSGAGGSF) are enriched in gly residues. Low complexity predominate over residues 203–246 (IGTTTSAKTTSTTSTSAATTTTTTTTSSSSSSPSSSSPSSTSPT). Positions 247-256 (IASNNDNNNK) are enriched in polar residues. A compositionally biased stretch (low complexity) spans 270–287 (PPLTLSQSQTQQQQQQKV). The span at 295-305 (RFSTNSSGSQS) shows a compositional bias: polar residues. An N-terminal Ras-GEF domain is found at 390-528 (NKFVVVSGPK…PILDLYEKLK (139 aa)). The tract at residues 540 to 583 (SLSGSGGISNNNNGSDLKNSNNGNNSSNNNNSSSNSSSSSSSSD) is disordered. A Ras-GEF domain is found at 676–911 (SPQDIAKQLT…YAFSKFIESP (236 aa)).

Functionally, promotes the exchange of Ras-bound GDP by GTP. The protein is Ras guanine nucleotide exchange factor M (gefM) of Dictyostelium discoideum (Social amoeba).